An 847-amino-acid polypeptide reads, in one-letter code: FAST kinase domain-containing protein 1, mitochondrial (847 aa).

The residue at position 360 (Lys360) is an N6-acetyllysine. Residues 777-837 enclose the RAP domain; that stretch reads IALEFLDSKA…KDARMDYLRE (61 aa).

The protein belongs to the FAST kinase family. As to expression, expression detected in spleen, thymus, testis, ovary, colon, heart, smooth muscle, kidney, brain, lung, liver and white adipose tissue with highest expression in heart.

It is found in the mitochondrion. Its function is as follows. Involved in the down-regulation of mitochondrial MT-ND3 mRNA levels which leads to decreased respiratory complex I abundance and activity. The chain is FAST kinase domain-containing protein 1, mitochondrial (FASTKD1) from Homo sapiens (Human).